Reading from the N-terminus, the 226-residue chain is Enolase-phosphatase E1 (226 aa).

The protein belongs to the HAD-like hydrolase superfamily. MasA/MtnC family. Monomer. It depends on Mg(2+) as a cofactor.

It carries out the reaction 5-methylsulfanyl-2,3-dioxopentyl phosphate + H2O = 1,2-dihydroxy-5-(methylsulfanyl)pent-1-en-3-one + phosphate. It functions in the pathway amino-acid biosynthesis; L-methionine biosynthesis via salvage pathway; L-methionine from S-methyl-5-thio-alpha-D-ribose 1-phosphate: step 3/6. It participates in amino-acid biosynthesis; L-methionine biosynthesis via salvage pathway; L-methionine from S-methyl-5-thio-alpha-D-ribose 1-phosphate: step 4/6. Its function is as follows. Bifunctional enzyme that catalyzes the enolization of 2,3-diketo-5-methylthiopentyl-1-phosphate (DK-MTP-1-P) into the intermediate 2-hydroxy-3-keto-5-methylthiopentenyl-1-phosphate (HK-MTPenyl-1-P), which is then dephosphorylated to form the acireductone 1,2-dihydroxy-3-keto-5-methylthiopentene (DHK-MTPene). This chain is Enolase-phosphatase E1, found in Shewanella sp. (strain ANA-3).